The sequence spans 160 residues: Ribosomal RNA large subunit methyltransferase H (160 aa).

S-adenosyl-L-methionine is bound by residues Leu-76, Gly-108, and 127–132 (LGKLTW).

Belongs to the RNA methyltransferase RlmH family. As to quaternary structure, homodimer.

It is found in the cytoplasm. The enzyme catalyses pseudouridine(1915) in 23S rRNA + S-adenosyl-L-methionine = N(3)-methylpseudouridine(1915) in 23S rRNA + S-adenosyl-L-homocysteine + H(+). Its function is as follows. Specifically methylates the pseudouridine at position 1915 (m3Psi1915) in 23S rRNA. The chain is Ribosomal RNA large subunit methyltransferase H from Agrobacterium fabrum (strain C58 / ATCC 33970) (Agrobacterium tumefaciens (strain C58)).